The following is a 109-amino-acid chain: Large ribosomal subunit protein uL24 (109 aa).

The tract at residues 85–109 is disordered; it reads KYGTDPKTNKKVRLSRKTNNLVGGQ.

It belongs to the universal ribosomal protein uL24 family. Part of the 50S ribosomal subunit.

Functionally, one of two assembly initiator proteins, it binds directly to the 5'-end of the 23S rRNA, where it nucleates assembly of the 50S subunit. One of the proteins that surrounds the polypeptide exit tunnel on the outside of the subunit. This chain is Large ribosomal subunit protein uL24, found in Mycoplasmoides gallisepticum (strain R(low / passage 15 / clone 2)) (Mycoplasma gallisepticum).